A 680-amino-acid polypeptide reads, in one-letter code: DNA ligase (680 aa).

Residues 35–39, 86–87, and E111 contribute to the NAD(+) site; these read DADFD and SL. K113 serves as the catalytic N6-AMP-lysine intermediate. Residues R134, E174, K290, and K314 each coordinate NAD(+). The Zn(2+) site is built by C408, C411, C427, and C433. The region spanning 597 to 680 is the BRCT domain; the sequence is VAEQTLEGLT…RLLNTGSADE (84 aa).

It belongs to the NAD-dependent DNA ligase family. LigA subfamily. Requires Mg(2+) as cofactor. The cofactor is Mn(2+).

The enzyme catalyses NAD(+) + (deoxyribonucleotide)n-3'-hydroxyl + 5'-phospho-(deoxyribonucleotide)m = (deoxyribonucleotide)n+m + AMP + beta-nicotinamide D-nucleotide.. In terms of biological role, DNA ligase that catalyzes the formation of phosphodiester linkages between 5'-phosphoryl and 3'-hydroxyl groups in double-stranded DNA using NAD as a coenzyme and as the energy source for the reaction. It is essential for DNA replication and repair of damaged DNA. This chain is DNA ligase, found in Corynebacterium glutamicum (strain ATCC 13032 / DSM 20300 / JCM 1318 / BCRC 11384 / CCUG 27702 / LMG 3730 / NBRC 12168 / NCIMB 10025 / NRRL B-2784 / 534).